The primary structure comprises 440 residues: Thymidine phosphorylase (440 aa).

The protein belongs to the thymidine/pyrimidine-nucleoside phosphorylase family. Homodimer.

It carries out the reaction thymidine + phosphate = 2-deoxy-alpha-D-ribose 1-phosphate + thymine. Its pathway is pyrimidine metabolism; dTMP biosynthesis via salvage pathway; dTMP from thymine: step 1/2. Functionally, the enzymes which catalyze the reversible phosphorolysis of pyrimidine nucleosides are involved in the degradation of these compounds and in their utilization as carbon and energy sources, or in the rescue of pyrimidine bases for nucleotide synthesis. This Serratia proteamaculans (strain 568) protein is Thymidine phosphorylase.